Reading from the N-terminus, the 409-residue chain is uncharacterized protein (409 aa).

A run of 12 helical transmembrane segments spans residues 3 to 23 (IIVKIPVWMLLSLFILSPTTE), 43 to 63 (ITQITSTLYFLGFAVGILSLG), 73 to 93 (PIVLLGLFIYIVSSIISIFSV), 95 to 115 (IEMLMIARFIQAFGVSVGSVI), 135 to 155 (ILSPWLLFIPSLGSYIGGYII), 162 to 182 (YVFVFFSLIGTILLALYYKIL), 209 to 229 (ILWLYAFIIGAFNGIYYGFFI), 248 to 268 (KLAFLLSFSAIFGGFLGGYLI), 283 to 303 (FIFSLCGCILFVVNAFILEFI), 309 to 329 (LAISMIFVPMMIHIIGHSLLI), 346 to 366 (TAGSIFGAIYYIVIAAVTYCV), and 379 to 399 (LLCLVSSISSVISFYYICILY).

It belongs to the major facilitator superfamily. Bcr/CmlA family.

Its subcellular location is the cell inner membrane. This is an uncharacterized protein from Rickettsia typhi (strain ATCC VR-144 / Wilmington).